A 305-amino-acid chain; its full sequence is Ornithine carbamoyltransferase (305 aa).

Residues 50-53 (STRT), Gln77, Arg101, and 128-131 (HPCQ) contribute to the carbamoyl phosphate site. L-ornithine contacts are provided by residues Asn159, Asp222, and 226-227 (SM). Residues 262 to 263 (CL) and Arg290 contribute to the carbamoyl phosphate site.

It belongs to the aspartate/ornithine carbamoyltransferase superfamily. OTCase family.

Its subcellular location is the cytoplasm. The enzyme catalyses carbamoyl phosphate + L-ornithine = L-citrulline + phosphate + H(+). Its pathway is amino-acid biosynthesis; L-arginine biosynthesis; L-arginine from L-ornithine and carbamoyl phosphate: step 1/3. Functionally, reversibly catalyzes the transfer of the carbamoyl group from carbamoyl phosphate (CP) to the N(epsilon) atom of ornithine (ORN) to produce L-citrulline. This chain is Ornithine carbamoyltransferase, found in Synechococcus elongatus (strain ATCC 33912 / PCC 7942 / FACHB-805) (Anacystis nidulans R2).